The sequence spans 549 residues: DDB1- and CUL4-associated factor 11 (549 aa).

A compositionally biased stretch (low complexity) spans 1 to 24; the sequence is MGSRNSSSAGSGSLEPSEGLSRRG. Positions 1–40 are disordered; the sequence is MGSRNSSSAGSGSLEPSEGLSRRGTGLRRSEEEEEEDEDV. Residues S73 and S75 each carry the phosphoserine modification. WD repeat units follow at residues 170–210, 216–258, 263–302, 305–345, 353–392, 435–480, and 481–520; these read TYSQ…HKFK, DVGW…TALD, ERRF…RTLQ, SHED…EDDP, GHQD…SREG, GVLH…KKLT, and NHKA…YFQD.

Interacts with DDB1 and CUL4A.

Its pathway is protein modification; protein ubiquitination. In terms of biological role, may function as a substrate receptor for CUL4-DDB1 E3 ubiquitin-protein ligase complex. In Mus musculus (Mouse), this protein is DDB1- and CUL4-associated factor 11 (Dcaf11).